The primary structure comprises 388 residues: Succinate--CoA ligase [ADP-forming] subunit beta (388 aa).

In terms of domain architecture, ATP-grasp spans 9–244 (KEIFRSMGVA…LEEEDPKEIE (236 aa)). Residues lysine 46, 53–55 (GRG), glutamate 99, cysteine 102, and glutamate 107 each bind ATP. Residues asparagine 199 and aspartate 213 each contribute to the Mg(2+) site. Substrate contacts are provided by residues asparagine 264 and 321-323 (GIM).

Belongs to the succinate/malate CoA ligase beta subunit family. As to quaternary structure, heterotetramer of two alpha and two beta subunits. The cofactor is Mg(2+).

It catalyses the reaction succinate + ATP + CoA = succinyl-CoA + ADP + phosphate. It carries out the reaction GTP + succinate + CoA = succinyl-CoA + GDP + phosphate. It functions in the pathway carbohydrate metabolism; tricarboxylic acid cycle; succinate from succinyl-CoA (ligase route): step 1/1. Its function is as follows. Succinyl-CoA synthetase functions in the citric acid cycle (TCA), coupling the hydrolysis of succinyl-CoA to the synthesis of either ATP or GTP and thus represents the only step of substrate-level phosphorylation in the TCA. The beta subunit provides nucleotide specificity of the enzyme and binds the substrate succinate, while the binding sites for coenzyme A and phosphate are found in the alpha subunit. The sequence is that of Succinate--CoA ligase [ADP-forming] subunit beta from Staphylococcus epidermidis (strain ATCC 35984 / DSM 28319 / BCRC 17069 / CCUG 31568 / BM 3577 / RP62A).